The primary structure comprises 472 residues: P2X purinoceptor 2 (472 aa).

Residues 1-34 (MVRRLARGCWSAFWDYETPKVIVVRNRRLGFVHR) lie on the Cytoplasmic side of the membrane. 6 cysteine pairs are disulfide-bonded: Cys9/Cys430, Cys113/Cys164, Cys124/Cys147, Cys130/Cys158, Cys214/Cys224, and Cys258/Cys267. The chain crosses the membrane as a helical span at residues 35–52 (MVQLLILLYFVWYVFIVQ). Over 53–326 (KSYQDSETGP…IVHGQAGKFS (274 aa)) the chain is Extracellular. Residues Lys69 and Lys71 each coordinate ATP. The N-linked (GlcNAc...) asparagine glycan is linked to Asn182. Thr184 provides a ligand contact to ATP. Residue Asn239 is glycosylated (N-linked (GlcNAc...) asparagine). Ser284, Asn288, and Arg290 together coordinate ATP. A glycan (N-linked (GlcNAc...) asparagine) is linked at Asn298. Lys308 is a binding site for ATP. The segment at 309–322 (AYGIRIDVIVHGQA) is pore-forming motif. A helical transmembrane segment spans residues 327–347 (LIPTIINLATALTSIGVGSFL). Residues 348-472 (CDWILLTFMN…STDPKGLAQL (125 aa)) lie on the Cytoplasmic side of the membrane. The segment at 393 to 472 (PPPSHYSQDQ…STDPKGLAQL (80 aa)) is disordered. Residues 456–465 (PSQQDSTSTD) show a composition bias toward polar residues.

It belongs to the P2X receptor family. Homotrimer and heterotrimer; functional P2XRs are organized as homomeric and heteromeric trimers. Homotrimer. Forms heterotrimer with P2RX1. Forms heterotrimer with P2RX6. Forms heterotrimer with P2RX3. As to expression, high levels in pituitary and vas deferens. Lower extent in spinal cord, bladder, brain, adrenal, testis, sensory epithelia from the inner ear.

Its subcellular location is the cell membrane. The catalysed reaction is Ca(2+)(in) = Ca(2+)(out). It carries out the reaction K(+)(in) = K(+)(out). The enzyme catalyses Na(+)(in) = Na(+)(out). Fast activation by external ATP. Exhibits slow desensitization during prolonged ATP activation. Not sensitive to the ATP agonist:alpha/beta-methylene-ATP. Its function is as follows. ATP-gated nonselective transmembrane cation channel permeable to potassium, sodium and calcium. Activation by extracellular ATP induces a variety of cellular responses, such as excitatory postsynaptic responses in sensory neurons, neuromuscular junctions (NMJ) formation, hearing, perception of taste and peristalsis. In the inner ear, regulates sound transduction and auditory neurotransmission, outer hair cell electromotility, inner ear gap junctions, and K(+) recycling. Mediates synaptic transmission between neurons and from neurons to smooth muscle. The sequence is that of P2X purinoceptor 2 (P2rx2) from Rattus norvegicus (Rat).